The following is a 455-amino-acid chain: T-box protein VegT-A (455 aa).

Disordered regions lie at residues 21–40, 229–262, and 295–346; these read SNCA…SSQD, REQE…DSPE, and ANQG…EPSS. The segment at residues 57-230 is a DNA-binding region (T-box); it reads LWSQFHQEGT…HNPFAKGFRE (174 aa). Over residues 229 to 241 the composition is skewed to basic and acidic residues; sequence REQERSHKRDDVL. Over residues 308 to 324 the composition is skewed to polar residues; that stretch reads GANQEQQVPTSSSNFYN.

Forms a repression complex on the promoters of the nodal/nr1 and siamois genes with the maternal factors tcf7l1/tcf3 and pouf5.1/oct-25. Interacts (via C-terminus) with tcf7l1/tcf3 (via N-terminus). Also interacts with the other POU-domain transcription factors pou5f1.2/oct-91 and pou5f1.3/oct-60. As to expression, uniformly distributed in stage I oocytes but becomes localized to the vegetal hemisphere by stage II and remains so thereafter throughout oogenesis and the early embryonic cleavage stages. Zygotic expression parallels blastopore formation and shifts from dorsal expression in the marginal zone of late blastula and early gastrula stages to a ventral/lateral expression at the posterior end of later stage embryos. Expression is excluded from the notochord. In tailbud and tadpole stages, expressed exclusively in a subset of posterior Rohon-Beard neurons.

The protein localises to the nucleus. Its function is as follows. Transcription factor required for both mesoderm and endoderm formation in the embryo; signaling determinants and concentration levels may determine which germ layer is formed. Acts together with beta-catenin to activate genes that are responsible for mesoderm induction including wnt-8, eomes t/bra, siamois, mix1 and sox17. Directly binds to promoter DNA. Patterns the mesoderm along the dorsoventral and posterior axis. Activates siamois gene transcription when alone or in combination with beta-catenin, but inhibits siamois transcription in combination with pou5f1.1/oct-25. This is T-box protein VegT-A (vegt-a) from Xenopus laevis (African clawed frog).